A 460-amino-acid polypeptide reads, in one-letter code: ATP synthase subunit beta (460 aa).

150–157 (GGAGVGKT) lines the ATP pocket.

Belongs to the ATPase alpha/beta chains family. F-type ATPases have 2 components, CF(1) - the catalytic core - and CF(0) - the membrane proton channel. CF(1) has five subunits: alpha(3), beta(3), gamma(1), delta(1), epsilon(1). CF(0) has three main subunits: a(1), b(2) and c(9-12). The alpha and beta chains form an alternating ring which encloses part of the gamma chain. CF(1) is attached to CF(0) by a central stalk formed by the gamma and epsilon chains, while a peripheral stalk is formed by the delta and b chains.

It is found in the cell inner membrane. It carries out the reaction ATP + H2O + 4 H(+)(in) = ADP + phosphate + 5 H(+)(out). Produces ATP from ADP in the presence of a proton gradient across the membrane. The catalytic sites are hosted primarily by the beta subunits. The chain is ATP synthase subunit beta from Salmonella paratyphi A (strain ATCC 9150 / SARB42).